The chain runs to 278 residues: Probable endonuclease 4 (278 aa).

The Zn(2+) site is built by His66, His106, Glu140, Asp172, His175, His209, Asp222, His224, and Glu254.

It belongs to the AP endonuclease 2 family. Zn(2+) is required as a cofactor.

The enzyme catalyses Endonucleolytic cleavage to 5'-phosphooligonucleotide end-products.. Endonuclease IV plays a role in DNA repair. It cleaves phosphodiester bonds at apurinic or apyrimidinic (AP) sites, generating a 3'-hydroxyl group and a 5'-terminal sugar phosphate. This is Probable endonuclease 4 from Haloquadratum walsbyi (strain DSM 16790 / HBSQ001).